We begin with the raw amino-acid sequence, 545 residues long: Beta-sesquiphellandrene synthase (545 aa).

Mg(2+) contacts are provided by aspartate 299, aspartate 303, asparagine 443, serine 447, and glutamate 451. Residues 299 to 303 (DDIMD) carry the DDXXD motif motif.

This sequence belongs to the terpene synthase family. Mg(2+) is required as a cofactor. The cofactor is Mn(2+).

The protein localises to the cytoplasm. It carries out the reaction (2E,6E)-farnesyl diphosphate = beta-sesquiphellandrene + diphosphate. Its pathway is secondary metabolite biosynthesis; terpenoid biosynthesis. Its function is as follows. Sesquiterpene synthase converting farnesyl diphosphate into beta-sesquiphellandrene and six minor products, zingiberene, 7-epi-sesquithujene, sesquisabinene A, (E)-alpha-bergamotene, (E)-beta-farnesene and beta-bisabolene. Can also accept geranyl diphosphate as substrate, producing nine monoterpenes, with myrcene and limonene as the major products. This is Beta-sesquiphellandrene synthase (TPS2) from Sorghum bicolor (Sorghum).